A 372-amino-acid chain; its full sequence is Flagellar P-ring protein (372 aa).

Positions 1–26 (MNLSSLPFRLLAAAVALCAIAAPASA) are cleaved as a signal peptide.

Belongs to the FlgI family. As to quaternary structure, the basal body constitutes a major portion of the flagellar organelle and consists of four rings (L,P,S, and M) mounted on a central rod.

The protein resides in the periplasm. It is found in the bacterial flagellum basal body. In terms of biological role, assembles around the rod to form the L-ring and probably protects the motor/basal body from shearing forces during rotation. This chain is Flagellar P-ring protein, found in Xanthomonas campestris pv. campestris (strain B100).